The following is a 546-amino-acid chain: Probable protein kinase UbiB (546 aa).

Residues 124–502 (DFDITPLASA…RVKQGQSRYL (379 aa)) enclose the Protein kinase domain. Residues 130–138 (LASASIAQV) and Lys-153 each bind ATP. Asp-288 functions as the Proton acceptor in the catalytic mechanism. Helical transmembrane passes span 501–518 (YLFG…LLFI) and 523–542 (WGMS…LIGW).

Belongs to the ABC1 family. UbiB subfamily.

The protein localises to the cell inner membrane. It participates in cofactor biosynthesis; ubiquinone biosynthesis [regulation]. In terms of biological role, is probably a protein kinase regulator of UbiI activity which is involved in aerobic coenzyme Q (ubiquinone) biosynthesis. The sequence is that of Probable protein kinase UbiB from Cronobacter sakazakii (strain ATCC BAA-894) (Enterobacter sakazakii).